The chain runs to 144 residues: D-aminoacyl-tRNA deacylase (144 aa).

Positions 136–137 match the Gly-cisPro motif, important for rejection of L-amino acids motif; that stretch reads GP.

Belongs to the DTD family. Homodimer.

The protein resides in the cytoplasm. The catalysed reaction is glycyl-tRNA(Ala) + H2O = tRNA(Ala) + glycine + H(+). The enzyme catalyses a D-aminoacyl-tRNA + H2O = a tRNA + a D-alpha-amino acid + H(+). Functionally, an aminoacyl-tRNA editing enzyme that deacylates mischarged D-aminoacyl-tRNAs. Also deacylates mischarged glycyl-tRNA(Ala), protecting cells against glycine mischarging by AlaRS. Acts via tRNA-based rather than protein-based catalysis; rejects L-amino acids rather than detecting D-amino acids in the active site. By recycling D-aminoacyl-tRNA to D-amino acids and free tRNA molecules, this enzyme counteracts the toxicity associated with the formation of D-aminoacyl-tRNA entities in vivo and helps enforce protein L-homochirality. This Aliivibrio fischeri (strain MJ11) (Vibrio fischeri) protein is D-aminoacyl-tRNA deacylase.